A 408-amino-acid polypeptide reads, in one-letter code: Leucine aminopeptidase 1 (408 aa).

The signal sequence occupies residues 1–16 (MKVSSAIALLLPVVAA). A propeptide spanning residues 17–89 (RFVDSAFEQD…SAQSATTGPA (73 aa)) is cleaved from the precursor. 3 N-linked (GlcNAc...) asparagine glycosylation sites follow: Asn-95, Asn-108, and Asn-182. The Zn(2+) site is built by His-190, Asp-209, Glu-248, and Asp-275. Cys-324 and Cys-328 are joined by a disulfide. His-357 lines the Zn(2+) pocket.

It belongs to the peptidase M28 family. M28E subfamily. Monomer. Requires Zn(2+) as cofactor.

It is found in the secreted. Its function is as follows. Extracellular aminopeptidase that allows assimilation of proteinaceous substrates. This chain is Leucine aminopeptidase 1 (LAP1), found in Grosmannia clavigera (strain kw1407 / UAMH 11150) (Blue stain fungus).